The primary structure comprises 303 residues: Probable cell division protein WhiA (303 aa).

The H-T-H motif DNA-binding region spans 272–303 (SIQQVADALEFPITKSGVNHRLRKINKIADDL).

This sequence belongs to the WhiA family.

Involved in cell division and chromosome segregation. This Streptococcus pyogenes serotype M1 protein is Probable cell division protein WhiA.